The following is a 113-amino-acid chain: UPF0102 protein Mfla_2283 (113 aa).

Belongs to the UPF0102 family.

The protein is UPF0102 protein Mfla_2283 of Methylobacillus flagellatus (strain ATCC 51484 / DSM 6875 / VKM B-1610 / KT).